The following is a 938-amino-acid chain: ATP-dependent RNA helicase DDX42 (938 aa).

Gly residues predominate over residues 1 to 18 (MNWNKGGPGTKRGFGFGG). Residues 1–114 (MNWNKGGPGT…KPVDSDSDDD (114 aa)) form a disordered region. At lysine 5 the chain carries N6-acetyllysine. Arginine 12 carries the omega-N-methylarginine modification. Residues 35-52 (SHSAFGATSSSSGFGKSA) are compositionally biased toward low complexity. Serine 58 carries the phosphoserine modification. Acidic residues predominate over residues 70 to 84 (DEENAYFEDEEEDSS). Phosphoserine occurs at positions 96, 104, 109, and 111. Positions 116-157 (LEAFMAEVEDQAARDMKRLEEKDKERKNVKGIRDDIEEEDDQ) form a coiled coil. A disordered region spans residues 182-203 (EYDSDGNPIAPTKKIIDPLPPI). Serine 185 carries the post-translational modification Phosphoserine. A Q motif motif is present at residues 253–281 (SSFAHFGFDEQLMHQIRKSEYTQPTPIQC). The region spanning 284–459 (VPVALSGRDM…RDILIDPIRV (176 aa)) is the Helicase ATP-binding domain. 297–304 (AKTGSGKT) lines the ATP pocket. The DEAD box signature appears at 407 to 410 (DEAD). In terms of domain architecture, Helicase C-terminal spans 487 to 632 (WLTRRLVEFT…HVSKELLDLA (146 aa)). Polar residues-rich tracts occupy residues 737-757 (LNSV…SPVT) and 786-798 (GVNN…NSRE). The segment at 737–938 (LNSVPTNSAQ…PKRKKSRWDS (202 aa)) is disordered. Positions 738–833 (NSVPTNSAQQ…TGNRHSDSPR (96 aa)) are necessary for interaction with TP53BP2. Serine 754 is subject to Phosphoserine. Positions 820–920 (SHGETGNRHS…KVDSKTDKTA (101 aa)) are enriched in basic and acidic residues. Residue lysine 899 forms a Glycyl lysine isopeptide (Lys-Gly) (interchain with G-Cter in SUMO2) linkage.

This sequence belongs to the DEAD box helicase family. DDX42 subfamily. Transient component of the SF3B subcomplex of the 17S U2 SnRNP complex. Interacts (via the C-terminus) with TP53BP2; the interaction is not inhibitied by TP53BP2 ubiquitination and is independent of p53/TP53. As to expression, expressed in several cell lines (at protein level). Expressed in liver, lung, tonsil, thymus, muscle and pancreatic islets.

It is found in the cytoplasm. It localises to the nucleus. Its subcellular location is the cajal body. The protein resides in the nucleus speckle. The enzyme catalyses ATP + H2O = ADP + phosphate + H(+). In terms of biological role, ATP-dependent RNA helicase that binds to partially double-stranded RNAs (dsRNAs) in order to unwind RNA secondary structures. Unwinding is promoted in the presence of single-strand binding proteins. Also mediates RNA duplex formation thereby displacing the single-strand RNA binding protein. ATP and ADP modulate its activity: ATP binding and hydrolysis by DDX42 triggers RNA strand separation, whereas the ADP-bound form of the protein triggers annealing of complementary RNA strands. Required for assembly of the 17S U2 SnRNP complex of the spliceosome, a large ribonucleoprotein complex that removes introns from transcribed pre-mRNAs: DDX42 associates transiently with the SF3B subcomplex of the 17S U2 SnRNP complex and is released after fulfilling its role in the assembly of 17S U2 SnRNP. Involved in the survival of cells by interacting with TP53BP2 and thereby counteracting the apoptosis-stimulating activity of TP53BP2. Relocalizes TP53BP2 to the cytoplasm. The polypeptide is ATP-dependent RNA helicase DDX42 (Homo sapiens (Human)).